The following is a 485-amino-acid chain: uncharacterized protein (485 aa).

The next 3 membrane-spanning stretches (helical) occupy residues 284-304, 328-348, and 353-373; these read LLAL…YPLF, LLDL…SFIK, and LALT…YNCL.

It belongs to the CBF/MAK21 family.

It is found in the membrane. This is an uncharacterized protein from Schizosaccharomyces pombe (strain 972 / ATCC 24843) (Fission yeast).